The chain runs to 247 residues: Carboxy-S-adenosyl-L-methionine synthase (247 aa).

Residues Tyr-40, 65 to 67, 90 to 91, 122 to 123, Asn-137, and Arg-204 contribute to the S-adenosyl-L-methionine site; these read GAS, DN, and DI.

It belongs to the class I-like SAM-binding methyltransferase superfamily. Cx-SAM synthase family. As to quaternary structure, homodimer.

The enzyme catalyses prephenate + S-adenosyl-L-methionine = carboxy-S-adenosyl-L-methionine + 3-phenylpyruvate + H2O. Its function is as follows. Catalyzes the conversion of S-adenosyl-L-methionine (SAM) to carboxy-S-adenosyl-L-methionine (Cx-SAM). This chain is Carboxy-S-adenosyl-L-methionine synthase, found in Pseudomonas putida (strain GB-1).